Consider the following 387-residue polypeptide: Probable nitrate transporter NarT (387 aa).

Helical transmembrane passes span 14 to 34 (TLSL…MPFI), 45 to 65 (ISVI…PFGY), 69 to 89 (IVGA…PIFL), 97 to 117 (GMLM…SVGV), 137 to 157 (GVGN…AGAI), 161 to 181 (NTVR…FFLG), 211 to 231 (WYFI…NFLV), 246 to 266 (GIFI…GDKF), 268 to 288 (AVQA…ILSL), 294 to 314 (LFTI…GLIF), 330 to 350 (GIVS…ITFV), and 358 to 378 (HLAF…MIHL).

It belongs to the major facilitator superfamily. Nitrate/nitrite porter (TC 2.A.1.8) family.

It is found in the cell membrane. Functionally, probably required for nitrate uptake under anoxic conditions. Also possibly involved in excretion of nitrite produced by the dissimilatory reduction of nitrate. The sequence is that of Probable nitrate transporter NarT (narT) from Staphylococcus epidermidis (strain ATCC 35984 / DSM 28319 / BCRC 17069 / CCUG 31568 / BM 3577 / RP62A).